The sequence spans 148 residues: MFRRPALQVLRQFVRHESEIASSLVLERSLNRVQLLGRVGQDPVMRQVEGKNPVTIFSLATNEMWRSGDNETYQMGDVSQKTTWHRISVFRPGLRDVAYQYVKKGSRIYVEGKVDYGEYMDKNNVRRQATTIIADNIVFLSDQTKEKA.

The transit peptide at M1 to H16 directs the protein to the mitochondrion. The region spanning L30–S141 is the SSB domain. 2 positions are modified to phosphoserine: S67 and S79. N6-acetyllysine is present on K113. K122 carries the post-translational modification N6-succinyllysine.

Homotetramer. Interacts with MPG/AAG, through inhibition of its glycosylase activity it potentially prevents formation of DNA breaks in ssDNA, ensuring that base removal primarily occurs in dsDNA. Interacts with POLDIP2. Interacts with PRIMPOL.

It localises to the mitochondrion. The protein localises to the mitochondrion matrix. Its subcellular location is the mitochondrion nucleoid. In terms of biological role, binds preferentially and cooperatively to pyrimidine rich single-stranded DNA (ss-DNA). In vitro, required to maintain the copy number of mitochondrial DNA (mtDNA) and plays a crucial role during mtDNA replication by stimulating the activity of the replisome components POLG and TWNK at the replication fork. Promotes the activity of the gamma complex polymerase POLG, largely by organizing the template DNA and eliminating secondary structures to favor ss-DNA conformations that facilitate POLG activity. In addition it is able to promote the 5'-3' unwinding activity of the mtDNA helicase TWNK. May also function in mtDNA repair. This is Single-stranded DNA-binding protein, mitochondrial (SSBP1) from Oryctolagus cuniculus (Rabbit).